The chain runs to 90 residues: RNA silencing suppressor (90 aa).

The interval 15–18 (KRRR) is basic.

Belongs to the carlaviruses nucleic acid-binding protein family.

In terms of biological role, suppressor of viral-induced RNA silencing. The potential mechanism of action is based on sequestering siRNAs. This is RNA silencing suppressor (ORF5) from Grapevine virus A (isolate Is 151) (GVA).